The sequence spans 307 residues: Ornithine carbamoyltransferase (307 aa).

Carbamoyl phosphate is bound by residues 53–56 (STRT), glutamine 80, arginine 104, and 131–134 (HPCQ). L-ornithine contacts are provided by residues asparagine 162, aspartate 220, and 224–225 (SM). Residues 260–261 (CL) and arginine 288 contribute to the carbamoyl phosphate site.

This sequence belongs to the aspartate/ornithine carbamoyltransferase superfamily. OTCase family.

Its subcellular location is the cytoplasm. The enzyme catalyses carbamoyl phosphate + L-ornithine = L-citrulline + phosphate + H(+). The protein operates within amino-acid biosynthesis; L-arginine biosynthesis; L-arginine from L-ornithine and carbamoyl phosphate: step 1/3. Its function is as follows. Reversibly catalyzes the transfer of the carbamoyl group from carbamoyl phosphate (CP) to the N(epsilon) atom of ornithine (ORN) to produce L-citrulline. In Nitrosomonas europaea (strain ATCC 19718 / CIP 103999 / KCTC 2705 / NBRC 14298), this protein is Ornithine carbamoyltransferase.